The chain runs to 225 residues: Thaumatin-like protein (225 aa).

The first 24 residues, 1–24 (MSTFKSLSLSALLFIAFLFTCARG), serve as a signal peptide directing secretion. 8 disulfide bridges follow: C33–C224, C74–C84, C89–C95, C140–C213, C146–C196, C154–C164, C168–C177, and C178–C183. N187 carries N-linked (GlcNAc...) asparagine glycosylation.

It belongs to the thaumatin family. Post-translationally, N-glycosylated. In terms of tissue distribution, woody stem plug.

The protein resides in the secreted. Functionally, has antifungal activity. This is Thaumatin-like protein (tlp) from Actinidia deliciosa (Kiwi).